The sequence spans 1270 residues: Breakpoint cluster region protein (1270 aa).

Residues 28–55 (VGDIEQELERCKASIRRLEQEVNQERFR) adopt a coiled-coil conformation. 4 disordered regions span residues 67–173 (KKSY…SADA), 201–249 (ISSL…DYED), 295–396 (KSPL…RHRQ), and 412–484 (TGQI…LEPT). Residues 126–139 (GRPATARRPAAAAP) show a composition bias toward low complexity. Phosphoserine occurs at positions 216 and 237. At Tyr-247 the chain carries Phosphotyrosine. Low complexity-rich tracts occupy residues 348-358 (SSGQSSRVSPS) and 371-384 (SPSQ…DSSS). A phosphoserine mark is found at Ser-358, Ser-379, and Ser-384. Residue Thr-387 is modified to Phosphothreonine. Phosphoserine is present on residues Ser-461 and Ser-465. Omega-N-methylarginine is present on Arg-473. Phosphoserine occurs at positions 475 and 487. Positions 497-690 (MRKWVLSGIL…QNFLSSINEE (194 aa)) constitute a DH domain. Tyr-553 carries the phosphotyrosine modification. Thr-640 is subject to Phosphothreonine. Tyr-643 is subject to Phosphotyrosine. Thr-692 bears the Phosphothreonine mark. The PH domain maps to 707-865 (QLLKDSFMVE…WRESIREQQK (159 aa)). Positions 892 to 1019 (HHIPLTINKE…QDRDWQRTVI (128 aa)) constitute a C2 domain. Residues 1053 to 1247 (VKIAVVTKRE…VMSQVQVLLY (195 aa)) form the Rho-GAP domain. Residue Ser-1263 is modified to Phosphoserine.

As to quaternary structure, homotetramer. Interacts with PDZK1. May interact with CCPG1. Interacts with HCK, FES/FPS, ABL1, PIK3R1 and GRB2. Interacts with SH2D5. Interacts with DLG4. In terms of processing, autophosphorylated. Phosphorylated by FES/FPS on tyrosine residues, leading to down-regulation of the BCR kinase activity. Phosphorylation by HCK is important for interaction with GRB2. Expressed in brain, including the cortex, hippocampus, cerebellum, and brainstem, as well as the spinal cord (at protein level).

It localises to the postsynaptic density. The protein localises to the cell projection. The protein resides in the dendritic spine. It is found in the axon. Its subcellular location is the synapse. The catalysed reaction is L-seryl-[protein] + ATP = O-phospho-L-seryl-[protein] + ADP + H(+). It carries out the reaction L-threonyl-[protein] + ATP = O-phospho-L-threonyl-[protein] + ADP + H(+). In terms of biological role, protein with a unique structure having two opposing regulatory activities toward small GTP-binding proteins. The C-terminus is a GTPase-activating protein (GAP) domain which stimulates GTP hydrolysis by RAC1, RAC2 and CDC42. Accelerates the intrinsic rate of GTP hydrolysis of RAC1 or CDC42, leading to down-regulation of the active GTP-bound form. The central Dbl homology (DH) domain functions as guanine nucleotide exchange factor (GEF) that modulates the GTPases CDC42, RHOA and RAC1. Promotes the conversion of CDC42, RHOA and RAC1 from the GDP-bound to the GTP-bound form. The amino terminus contains an intrinsic kinase activity. Functions as an important negative regulator of neuronal RAC1 activity. Regulates macrophage functions such as CSF1-directed motility and phagocytosis through the modulation of RAC1 activity. Plays a major role as a RHOA GEF in keratinocytes being involved in focal adhesion formation and keratinocyte differentiation. The chain is Breakpoint cluster region protein from Rattus norvegicus (Rat).